Consider the following 178-residue polypeptide: PEST proteolytic signal-containing nuclear protein (178 aa).

Residues 1–15 show a composition bias toward basic and acidic residues; sequence MADGKAGEEKPEKSQ. Residues 1–84 are disordered; the sequence is MADGKAGEEK…IGSQTTKKAS (84 aa). An N-acetylalanine modification is found at Ala2. The segment covering 37 to 47 has biased composition (low complexity); the sequence is SSSNGGESSSR. Residue Ser53 is modified to Phosphoserine. Lys64 carries the post-translational modification N6-acetyllysine. Residues Ser77, Ser87, and Ser119 each carry the phosphoserine modification. The disordered stretch occupies residues 134 to 178; the sequence is NIGRDTPTSAGPNSFNKGKHGFSDNQKLWERNIKSHLGNVHDQDN. At Thr139 the chain carries Phosphothreonine. The span at 139–149 shows a compositional bias: polar residues; that stretch reads TPTSAGPNSFN. At Ser147 the chain carries Phosphoserine. An N6-acetyllysine mark is found at Lys150 and Lys152. Basic and acidic residues predominate over residues 160–178; it reads KLWERNIKSHLGNVHDQDN.

In terms of assembly, interacts with UHRF2/NIRF. In terms of processing, ubiquitinated; mediated by UHRF2 and leading to its subsequent proteasomal degradation. N-terminally acetylated in a HYPK-dependent manner by the NatA acetyltransferase complex which is composed of NAA10 and NAA15.

It localises to the nucleus. Its function is as follows. May be involved in cell cycle regulation. This Pongo abelii (Sumatran orangutan) protein is PEST proteolytic signal-containing nuclear protein (PCNP).